The sequence spans 527 residues: Probable feruloyl esterase B (527 aa).

Positions 1 to 19 (MALLRHLLPVLTVGSAVQS) are cleaved as a signal peptide. Cystine bridges form between Cys-31–Cys-76 and Cys-65–Cys-115. Residues Asn-56, Asn-86, and Asn-139 are each glycosylated (N-linked (GlcNAc...) asparagine). Disulfide bonds link Cys-188-Cys-442, Cys-257-Cys-274, Cys-283-Cys-292, and Cys-504-Cys-526. Ser-189 (acyl-ester intermediate) is an active-site residue. 5 residues coordinate Ca(2+): Asp-258, Asp-261, Ala-263, Asp-265, and Ile-267. Residue Asn-277 is glycosylated (N-linked (GlcNAc...) asparagine). N-linked (GlcNAc...) asparagine glycans are attached at residues Asn-312 and Asn-356. Residues Asp-401 and His-441 each act as charge relay system in the active site.

The protein belongs to the tannase family.

It is found in the secreted. It carries out the reaction feruloyl-polysaccharide + H2O = ferulate + polysaccharide.. In terms of biological role, involved in degradation of plant cell walls. Hydrolyzes the feruloyl-arabinose ester bond in arabinoxylans as well as the feruloyl-galactose and feruloyl-arabinose ester bonds in pectin. This chain is Probable feruloyl esterase B (faeB), found in Emericella nidulans (strain FGSC A4 / ATCC 38163 / CBS 112.46 / NRRL 194 / M139) (Aspergillus nidulans).